The sequence spans 485 residues: Glutamyl-tRNA(Gln) amidotransferase subunit A (485 aa).

Catalysis depends on charge relay system residues Lys-79 and Ser-154. Ser-178 acts as the Acyl-ester intermediate in catalysis.

Belongs to the amidase family. GatA subfamily. In terms of assembly, heterotrimer of A, B and C subunits.

The catalysed reaction is L-glutamyl-tRNA(Gln) + L-glutamine + ATP + H2O = L-glutaminyl-tRNA(Gln) + L-glutamate + ADP + phosphate + H(+). Allows the formation of correctly charged Gln-tRNA(Gln) through the transamidation of misacylated Glu-tRNA(Gln) in organisms which lack glutaminyl-tRNA synthetase. The reaction takes place in the presence of glutamine and ATP through an activated gamma-phospho-Glu-tRNA(Gln). The protein is Glutamyl-tRNA(Gln) amidotransferase subunit A of Bacillus velezensis (strain DSM 23117 / BGSC 10A6 / LMG 26770 / FZB42) (Bacillus amyloliquefaciens subsp. plantarum).